Reading from the N-terminus, the 554-residue chain is Zinc finger protein syd-9 (554 aa).

C2H2-type zinc fingers lie at residues 20 to 43 (LTCPQCPKSFSSTKLLQQHQQMFH), 65 to 87 (FICETCGKAFRFRSNLAEHRSVH), and 93 to 116 (YVCKFCGKSSRLKGNLTKHILKHH). 3 disordered regions span residues 136–158 (KIVTKDNGPTTNGSTPTTSTATP), 298–319 (SPDTVQSDHSDDFEQDSPPPMA), and 342–383 (ASGQ…CPSP). Positions 142–158 (NGPTTNGSTPTTSTATP) are enriched in low complexity. Composition is skewed to polar residues over residues 351 to 360 (PDSTDTQKGC) and 370 to 379 (SDPSTSSGDS). The C2H2-type 4 zinc finger occupies 387 to 410 (LHCKECGTLVRKSSHLPIHMTMSH). Positions 516-554 (RMEMSLSPIKPFQQRFSRERSSSSSVERSPSRERSRSPL) are disordered. Residues 544-554 (SPSRERSRSPL) show a composition bias toward basic and acidic residues.

Expressed mainly in body wall muscles and ventral cord motoneurons.

It localises to the nucleus. The protein localises to the nucleus speckle. Functionally, plays a role in regulating synaptic function, probably by modulation of endocytosis. May be dispensable in muscle for normal locomotion. May be involved in post-transcriptional mRNA processing, in parallel with unc-75. The protein is Zinc finger protein syd-9 of Caenorhabditis elegans.